The primary structure comprises 131 residues: MPPKGKSGSGKGGKGGAASGSDSADKKSQGPKGGGNAVKVRHILCEKHGKIMEAMEKLKSGMRFSEVATQYSEDKARQGGDLGWMTRGSMVGPFQEAAFALPVSGMDKPVFTDPPVKTKFGYHIIMVEGRK.

The interval 1–25 (MPPKGKSGSGKGGKGGAASGSDSAD) is necessary for nuclear localization and DNA-binding. The interval 1–39 (MPPKGKSGSGKGGKGGAASGSDSADKKSQGPKGGGNAVK) is disordered. The tract at residues 1–41 (MPPKGKSGSGKGGKGGAASGSDSADKKSQGPKGGGNAVKVR) is necessary for association with the pre-rRNP complexes. Residues 7-18 (SGSGKGGKGGAA) are compositionally biased toward gly residues. Ser-19 bears the Phosphoserine; by CK2 mark. One can recognise a PpiC domain in the interval 35-129 (GNAVKVRHIL…FGYHIIMVEG (95 aa)).

This sequence belongs to the PpiC/parvulin rotamase family. PIN4 subfamily. Found in pre-ribosomal ribonucleoprotein (pre-rRNP) complexes. Post-translationally, phosphorylated. Phosphorylation occurs both in the nucleus and the cytoplasm. Phosphorylation at Ser-19 does not affect its PPIase activity but is required for nuclear localization, and the dephosphorylation is a prerequisite for the binding to DNA. The unphosphorylated form associates with the pre-rRNP complexes in the nucleus.

The protein localises to the nucleus. It localises to the nucleolus. Its subcellular location is the cytoplasm. It is found in the cytoskeleton. The protein resides in the spindle. It catalyses the reaction [protein]-peptidylproline (omega=180) = [protein]-peptidylproline (omega=0). In terms of biological role, involved as a ribosomal RNA processing factor in ribosome biogenesis. Binds to tightly bent AT-rich stretches of double-stranded DNA. The protein is Peptidyl-prolyl cis-trans isomerase NIMA-interacting 4 (Pin4) of Mus musculus (Mouse).